Here is a 458-residue protein sequence, read N- to C-terminus: Sushi repeat-containing protein SRPX2 (458 aa).

A signal peptide spans 1-18 (MEASITVLLFAFTKVASS). 3 Sushi domains span residues 62–112 (ATCY…HCRR), 113–171 (IQCH…VCVD), and 255–314 (RRCP…TCTP). Disulfide bonds link Cys64/Cys98, Cys84/Cys110, Cys115/Cys156, and Cys142/Cys169. In terms of domain architecture, HYR spans 170 to 254 (VDLDPPKIQC…SCKFIVKVQV (85 aa)). 2 disulfides stabilise this stretch: Cys257–Cys299 and Cys285–Cys312.

Forms homooligomers.

It localises to the secreted. Its subcellular location is the cytoplasm. It is found in the cell surface. The protein localises to the synapse. In terms of biological role, may play a role in angiogenesis, synapse formation, cellular migration and adhesion. This chain is Sushi repeat-containing protein SRPX2 (srpx2), found in Xenopus laevis (African clawed frog).